Here is a 90-residue protein sequence, read N- to C-terminus: PIK3R3 upstream open reading frame protein (90 aa).

The interval 1–63 (MGPSQLVRAP…PASEATNISD (63 aa)) is disordered. Residues 27–46 (PRRRCPSMFKCSRRTYRQKP) are compositionally biased toward basic residues. Residues 50 to 63 (TATNPASEATNISD) are compositionally biased toward polar residues.

The polypeptide is PIK3R3 upstream open reading frame protein (Mus musculus (Mouse)).